The chain runs to 280 residues: Chemotaxis protein methyltransferase 2 (280 aa).

In terms of domain architecture, CheR-type methyltransferase spans 10–280 (FGNQEFHYTR…SVGQTVYSPA (271 aa)). Residues N85, T87, R91, E125, D150, 208–209 (NL), and 226–227 (RN) each bind S-adenosyl-L-methionine.

As to quaternary structure, interacts with the C-terminal pentapeptide GWEEF of the methyl-accepting chemotaxis protein McpB.

It catalyses the reaction L-glutamyl-[protein] + S-adenosyl-L-methionine = [protein]-L-glutamate 5-O-methyl ester + S-adenosyl-L-homocysteine. Its function is as follows. Methylation of the methyl-accepting chemotaxis proteins (MCP) to form gamma-glutamyl methyl ester residues in MCP. It specifically targets the McpB chemoreceptor. The protein is Chemotaxis protein methyltransferase 2 of Pseudomonas aeruginosa (strain ATCC 15692 / DSM 22644 / CIP 104116 / JCM 14847 / LMG 12228 / 1C / PRS 101 / PAO1).